The chain runs to 251 residues: Triosephosphate isomerase (251 aa).

9-11 is a substrate binding site; it reads NWK. Residue His-95 is the Electrophile of the active site. Residue Glu-167 is the Proton acceptor of the active site. Substrate-binding positions include Gly-173, Ser-213, and 234–235; that span reads GG.

Belongs to the triosephosphate isomerase family. Homodimer.

The protein localises to the cytoplasm. The enzyme catalyses D-glyceraldehyde 3-phosphate = dihydroxyacetone phosphate. Its pathway is carbohydrate biosynthesis; gluconeogenesis. The protein operates within carbohydrate degradation; glycolysis; D-glyceraldehyde 3-phosphate from glycerone phosphate: step 1/1. Functionally, involved in the gluconeogenesis. Catalyzes stereospecifically the conversion of dihydroxyacetone phosphate (DHAP) to D-glyceraldehyde-3-phosphate (G3P). This chain is Triosephosphate isomerase, found in Trichlorobacter lovleyi (strain ATCC BAA-1151 / DSM 17278 / SZ) (Geobacter lovleyi).